The following is a 286-amino-acid chain: Aminoglycoside N(3)-acetyltransferase VIII (286 aa).

It belongs to the antibiotic N-acetyltransferase family.

The enzyme catalyses a 2-deoxystreptamine antibiotic + acetyl-CoA = an N(3)-acetyl-2-deoxystreptamine antibiotic + CoA + H(+). Functionally, resistance to neomycin. The sequence is that of Aminoglycoside N(3)-acetyltransferase VIII (aacC8) from Streptomyces fradiae (Streptomyces roseoflavus).